The following is a 309-amino-acid chain: D-alanine--D-alanine ligase (309 aa).

The ATP-grasp domain maps to 104 to 306 (KLLWQSFNLP…YQILVQKILE (203 aa)). 137–192 (ISLLGLPIIVKPNQEGSSIGITIVYSYETLYKACKTAFIFDNSILIEKFIYGEEYT) contacts ATP. Mg(2+) contacts are provided by aspartate 260, glutamate 273, and asparagine 275.

It belongs to the D-alanine--D-alanine ligase family. Mg(2+) serves as cofactor. It depends on Mn(2+) as a cofactor.

The protein resides in the cytoplasm. The enzyme catalyses 2 D-alanine + ATP = D-alanyl-D-alanine + ADP + phosphate + H(+). The protein operates within cell wall biogenesis; peptidoglycan biosynthesis. In terms of biological role, cell wall formation. This Buchnera aphidicola subsp. Baizongia pistaciae (strain Bp) protein is D-alanine--D-alanine ligase.